The following is a 325-amino-acid chain: Interleukin-10 receptor subunit beta (325 aa).

The signal sequence occupies residues 1-19; the sequence is MAWSLGSWLGGCLLVSALG. Over 20-220 the chain is Extracellular; it reads MVPPPENVRM…QTTHDETVPS (201 aa). Fibronectin type-III domains follow at residues 23–111 and 114–216; these read PPEN…VDDT and GPPG…THDE. 4 N-linked (GlcNAc...) asparagine glycosylation sites follow: asparagine 49, asparagine 68, asparagine 102, and asparagine 161. Cysteine 66 and cysteine 74 form a disulfide bridge. Cysteine 188 and cysteine 209 are joined by a disulfide. Residues 221-242 traverse the membrane as a helical segment; that stretch reads WMVAVILMASVFMVCLALLGCF. The Cytoplasmic portion of the chain corresponds to 243 to 325; the sequence is ALLWCVYKKT…GTPPGQGPQS (83 aa). The tract at residues 301–325 is disordered; that stretch reads DSESGKQNPGDSCSLGTPPGQGPQS. The span at 305–315 shows a compositional bias: polar residues; sequence GKQNPGDSCSL.

Belongs to the type II cytokine receptor family. As to quaternary structure, heterodimer with IFNLR1.

The protein localises to the membrane. Shared cell surface receptor required for the activation of five class 2 cytokines: IL10, IL22, IL26, IL28, and IFNL1. The IFNLR1/IL10RB dimer is a receptor for the cytokine ligands IFNL2 and IFNL3 and mediates their antiviral activity. The ligand/receptor complex stimulate the activation of the JAK/STAT signaling pathway leading to the expression of IFN-stimulated genes (ISG), which contribute to the antiviral state. The polypeptide is Interleukin-10 receptor subunit beta (IL10RB) (Homo sapiens (Human)).